Here is a 59-residue protein sequence, read N- to C-terminus: U-scoloptoxin(23)-Er2a (59 aa).

Belongs to the scoloptoxin-23 family. In terms of processing, contains 1 disulfide bond. Expressed by the venom gland.

It is found in the secreted. The protein is U-scoloptoxin(23)-Er2a of Ethmostigmus rubripes (Giant centipede).